Reading from the N-terminus, the 111-residue chain is Large ribosomal subunit protein uL22 (111 aa).

Belongs to the universal ribosomal protein uL22 family. In terms of assembly, part of the 50S ribosomal subunit.

This protein binds specifically to 23S rRNA; its binding is stimulated by other ribosomal proteins, e.g. L4, L17, and L20. It is important during the early stages of 50S assembly. It makes multiple contacts with different domains of the 23S rRNA in the assembled 50S subunit and ribosome. Functionally, the globular domain of the protein is located near the polypeptide exit tunnel on the outside of the subunit, while an extended beta-hairpin is found that lines the wall of the exit tunnel in the center of the 70S ribosome. In Wigglesworthia glossinidia brevipalpis, this protein is Large ribosomal subunit protein uL22.